Reading from the N-terminus, the 119-residue chain is Large ribosomal subunit protein bL19 (119 aa).

The protein belongs to the bacterial ribosomal protein bL19 family.

In terms of biological role, this protein is located at the 30S-50S ribosomal subunit interface and may play a role in the structure and function of the aminoacyl-tRNA binding site. The sequence is that of Large ribosomal subunit protein bL19 from Pelobacter propionicus (strain DSM 2379 / NBRC 103807 / OttBd1).